The sequence spans 876 residues: Valine--tRNA ligase (876 aa).

A 'HIGH' region motif is present at residues 44 to 54; that stretch reads PNVTGKLHLGH. A 'KMSKS' region motif is present at residues 520-524; it reads KMSKS. Residue K523 participates in ATP binding. A coiled-coil region spans residues 805–876; the sequence is LEGLIDMDKE…VKARIEQLKA (72 aa).

Belongs to the class-I aminoacyl-tRNA synthetase family. ValS type 1 subfamily. As to quaternary structure, monomer.

It is found in the cytoplasm. The catalysed reaction is tRNA(Val) + L-valine + ATP = L-valyl-tRNA(Val) + AMP + diphosphate. Catalyzes the attachment of valine to tRNA(Val). As ValRS can inadvertently accommodate and process structurally similar amino acids such as threonine, to avoid such errors, it has a 'posttransfer' editing activity that hydrolyzes mischarged Thr-tRNA(Val) in a tRNA-dependent manner. This is Valine--tRNA ligase from Staphylococcus carnosus (strain TM300).